The primary structure comprises 119 residues: Venom allergen 2 (119 aa).

The protein belongs to the ant venom allergen 2/4 family. Homodimer; disulfide-linked. In terms of tissue distribution, expressed by the venom gland.

It localises to the secreted. The polypeptide is Venom allergen 2 (Solenopsis richteri (Black imported fire ant)).